A 540-amino-acid polypeptide reads, in one-letter code: Phosphoenolpyruvate carboxykinase (ATP) (540 aa).

Arg65 is a binding site for substrate. Residue Lys87 is modified to N6-acetyllysine. 2 residues coordinate substrate: Tyr207 and Lys213. ATP contacts are provided by residues Lys213, His232, and 248–256 (GLSGTGKTT). Lys213 and His232 together coordinate Mn(2+). Asp269 lines the Mn(2+) pocket. Residues Glu297, Arg333, 449-450 (RI), and Thr455 each bind ATP. Arg333 contacts substrate. The residue at position 523 (Lys523) is an N6-acetyllysine.

It belongs to the phosphoenolpyruvate carboxykinase (ATP) family. In terms of assembly, monomer. Mn(2+) serves as cofactor.

The protein localises to the cytoplasm. The catalysed reaction is oxaloacetate + ATP = phosphoenolpyruvate + ADP + CO2. Its pathway is carbohydrate biosynthesis; gluconeogenesis. Its function is as follows. Involved in the gluconeogenesis. Catalyzes the conversion of oxaloacetate (OAA) to phosphoenolpyruvate (PEP) through direct phosphoryl transfer between the nucleoside triphosphate and OAA. This chain is Phosphoenolpyruvate carboxykinase (ATP), found in Escherichia coli O6:H1 (strain CFT073 / ATCC 700928 / UPEC).